The following is a 460-amino-acid chain: Muscarinic acetylcholine receptor M1 (460 aa).

Residues 1-22 lie on the Extracellular side of the membrane; it reads MNTSAPPAVSPNITVLAPGKGP. Asn-2 and Asn-12 each carry an N-linked (GlcNAc...) asparagine glycan. A helical membrane pass occupies residues 23 to 48; sequence WQVAFIGITTGLLSLATVTGNLLVLI. Residues 49-62 lie on the Cytoplasmic side of the membrane; it reads SFKVNTELKTVNNY. The helical transmembrane segment at 63-84 threads the bilayer; sequence FLLSLACADLIIGTFSMNLYTT. Residues 85-95 lie on the Extracellular side of the membrane; the sequence is YLLMGHWALGT. The helical transmembrane segment at 96 to 121 threads the bilayer; that stretch reads LACDLWLALDYVASNASVMNLLLISF. A disulfide bridge links Cys-98 with Cys-178. The Cytoplasmic segment spans residues 122-142; sequence DRYFSVTRPLSYRAKRTPRRA. The helical transmembrane segment at 143–164 threads the bilayer; that stretch reads ALMIGLAWLVSFVLWAPAILFW. The Extracellular portion of the chain corresponds to 165-185; that stretch reads QYLVGERTVLAGQCYIQFLSQ. A helical transmembrane segment spans residues 186-209; that stretch reads PIITFGTAMAAFYLPVTVMCTLYW. Over 210 to 366 the chain is Cytoplasmic; that stretch reads RIYRETENRA…LVKEKKAART (157 aa). 3 disordered regions span residues 225 to 259, 273 to 297, and 310 to 351; these read LQGS…PGRC, SWKE…EEPG, and EAQA…QLAK. Thr-230 carries the post-translational modification Phosphothreonine. Over residues 238 to 247 the composition is skewed to low complexity; it reads SSSSERSQPG. The segment covering 328–343 has biased composition (basic residues); it reads RPTKKGRDRAGKGQKP. The helical transmembrane segment at 367 to 390 threads the bilayer; it reads LSAILLAFILTWTPYNIMVLVSTF. Over 391-401 the chain is Extracellular; it reads CKDCVPETLWE. A helical membrane pass occupies residues 402–420; the sequence is LGYWLCYVNSTINPMCYAL. At 421-460 the chain is on the cytoplasmic side; that stretch reads CNKAFRDTFRLLLLCRWDKRRWRKIPKRPGSVHRTPSRQC. Phosphothreonine is present on Thr-428. Position 451 is a phosphoserine (Ser-451). At Thr-455 the chain carries Phosphothreonine. Ser-457 is subject to Phosphoserine.

This sequence belongs to the G-protein coupled receptor 1 family. Muscarinic acetylcholine receptor subfamily. CHRM1 sub-subfamily. As to quaternary structure, interacts with GPRASP2. Interacts with TMEM147.

The protein resides in the cell membrane. It is found in the postsynaptic cell membrane. Functionally, the muscarinic acetylcholine receptor mediates various cellular responses, including inhibition of adenylate cyclase, breakdown of phosphoinositides and modulation of potassium channels through the action of G proteins. Primary transducing effect is Pi turnover. This Macaca mulatta (Rhesus macaque) protein is Muscarinic acetylcholine receptor M1 (CHRM1).